A 208-amino-acid chain; its full sequence is Outer-membrane lipoprotein carrier protein (208 aa).

The N-terminal stretch at 1-21 is a signal peptide; sequence MRLIRTLFVAALAMGASLAHA.

Belongs to the LolA family. In terms of assembly, monomer.

It localises to the periplasm. Its function is as follows. Participates in the translocation of lipoproteins from the inner membrane to the outer membrane. Only forms a complex with a lipoprotein if the residue after the N-terminal Cys is not an aspartate (The Asp acts as a targeting signal to indicate that the lipoprotein should stay in the inner membrane). In Pseudomonas aeruginosa (strain UCBPP-PA14), this protein is Outer-membrane lipoprotein carrier protein.